Here is a 228-residue protein sequence, read N- to C-terminus: ATP-dependent dethiobiotin synthetase BioD (228 aa).

Glu-12–Thr-17 is an ATP binding site. Thr-16 serves as a coordination point for Mg(2+). Residue Lys-37 is part of the active site. Substrate is bound at residue Ser-41. ATP-binding positions include Asp-54, Glu-116–Gly-119, and Pro-205–Leu-207. Asp-54 and Glu-116 together coordinate Mg(2+).

Belongs to the dethiobiotin synthetase family. Homodimer. It depends on Mg(2+) as a cofactor.

Its subcellular location is the cytoplasm. It carries out the reaction (7R,8S)-7,8-diammoniononanoate + CO2 + ATP = (4R,5S)-dethiobiotin + ADP + phosphate + 3 H(+). It participates in cofactor biosynthesis; biotin biosynthesis; biotin from 7,8-diaminononanoate: step 1/2. In terms of biological role, catalyzes a mechanistically unusual reaction, the ATP-dependent insertion of CO2 between the N7 and N8 nitrogen atoms of 7,8-diaminopelargonic acid (DAPA, also called 7,8-diammoniononanoate) to form a ureido ring. This is ATP-dependent dethiobiotin synthetase BioD from Pseudomonas aeruginosa (strain ATCC 15692 / DSM 22644 / CIP 104116 / JCM 14847 / LMG 12228 / 1C / PRS 101 / PAO1).